A 242-amino-acid polypeptide reads, in one-letter code: UDP-2,3-diacylglucosamine hydrolase (242 aa).

Residues Asp-7, His-9, Asp-40, Asn-78, and His-113 each coordinate Mn(2+). 78-79 (NR) contributes to the substrate binding site. Asp-121, Ser-159, Thr-163, Lys-166, and His-194 together coordinate substrate. Mn(2+) is bound by residues His-194 and His-196.

This sequence belongs to the LpxH family. The cofactor is Mn(2+).

It is found in the cell inner membrane. The enzyme catalyses UDP-2-N,3-O-bis[(3R)-3-hydroxytetradecanoyl]-alpha-D-glucosamine + H2O = 2-N,3-O-bis[(3R)-3-hydroxytetradecanoyl]-alpha-D-glucosaminyl 1-phosphate + UMP + 2 H(+). Its pathway is glycolipid biosynthesis; lipid IV(A) biosynthesis; lipid IV(A) from (3R)-3-hydroxytetradecanoyl-[acyl-carrier-protein] and UDP-N-acetyl-alpha-D-glucosamine: step 4/6. Functionally, hydrolyzes the pyrophosphate bond of UDP-2,3-diacylglucosamine to yield 2,3-diacylglucosamine 1-phosphate (lipid X) and UMP by catalyzing the attack of water at the alpha-P atom. Involved in the biosynthesis of lipid A, a phosphorylated glycolipid that anchors the lipopolysaccharide to the outer membrane of the cell. This is UDP-2,3-diacylglucosamine hydrolase from Ectopseudomonas mendocina (strain ymp) (Pseudomonas mendocina).